We begin with the raw amino-acid sequence, 351 residues long: sn-1 oleoyl-lipid 12-desaturase (351 aa).

Positions methionine 1–serine 20 are disordered. 2 helical membrane passes run alanine 44–isoleucine 62 and phenylalanine 68–glycine 88. The Histidine box-1 signature appears at histidine 89–histidine 93. The helical transmembrane segment at valine 100–serine 120 threads the bilayer. The short motif at histidine 125 to histidine 129 is the Histidine box-2 element. Helical transmembrane passes span leucine 199–tryptophan 219 and phenylalanine 221–leucine 241. Residues histidine 289–threonine 293 carry the Histidine box-3 motif.

The protein belongs to the fatty acid desaturase type 2 family. Requires Fe(2+) as cofactor.

The protein localises to the cellular thylakoid membrane. It catalyses the reaction a 1-[(9Z)-octadecenoyl]-2-acyl-glycerolipid + 2 reduced [2Fe-2S]-[ferredoxin] + O2 + 2 H(+) = a 1-[(9Z,12Z)-octadecdienoyl]-2-acyl-glycerolipid + 2 oxidized [2Fe-2S]-[ferredoxin] + 2 H2O. Its pathway is lipid metabolism; polyunsaturated fatty acid biosynthesis. Its function is as follows. Desaturase involved in fatty acid biosynthesis. Introduces a double bond at carbon 12 of oleoyl groups (18:1) attached to the sn-1 position of the glycerol moiety of membrane glycerolipids. This Arthrospira platensis (Spirulina platensis) protein is sn-1 oleoyl-lipid 12-desaturase.